A 62-amino-acid chain; its full sequence is UPF0434 protein RL4569 (62 aa).

This sequence belongs to the UPF0434 family.

This Rhizobium johnstonii (strain DSM 114642 / LMG 32736 / 3841) (Rhizobium leguminosarum bv. viciae) protein is UPF0434 protein RL4569.